We begin with the raw amino-acid sequence, 418 residues long: Queuine tRNA-ribosyltransferase accessory subunit 2 (418 aa).

Positions 325, 327, 330, and 356 each coordinate Zn(2+).

This sequence belongs to the queuine tRNA-ribosyltransferase family. QTRT2 subfamily. In terms of assembly, heterodimer of a catalytic subunit and an accessory subunit. Zn(2+) is required as a cofactor.

The protein resides in the cytoplasm. Non-catalytic subunit of the queuine tRNA-ribosyltransferase (TGT) that catalyzes the base-exchange of a guanine (G) residue with queuine (Q) at position 34 (anticodon wobble position) in tRNAs with GU(N) anticodons (tRNA-Asp, -Asn, -His and -Tyr), resulting in the hypermodified nucleoside queuosine (7-(((4,5-cis-dihydroxy-2-cyclopenten-1-yl)amino)methyl)-7-deazaguanosine). The chain is Queuine tRNA-ribosyltransferase accessory subunit 2 from Drosophila yakuba (Fruit fly).